The primary structure comprises 378 residues: Ferredoxin--NADP reductase, embryo isozyme, chloroplastic (378 aa).

A chloroplast-targeting transit peptide spans 1–62 (MASALGAQAS…SRHMNKIFSM (62 aa)). Positions 93 to 221 (KEPYTATIVS…TGPSGKIMLL (129 aa)) constitute an FAD-binding FR-type domain. FAD-binding positions include 153–156 (RLYS), 174–176 (CVR), tyrosine 180, 195–197 (ICS), and threonine 237. NADP(+) is bound by residues serine 156 and arginine 176. NADP(+) is bound by residues threonine 237, 269–270 (VA), 299–300 (SR), lysine 309, 337–338 (GL), and glutamate 376.

It belongs to the ferredoxin--NADP reductase type 1 family. FAD is required as a cofactor.

The protein resides in the plastid. It localises to the chloroplast. It catalyses the reaction 2 reduced [2Fe-2S]-[ferredoxin] + NADP(+) + H(+) = 2 oxidized [2Fe-2S]-[ferredoxin] + NADPH. It participates in energy metabolism; photosynthesis. In terms of biological role, may play a key role in regulating the relative amounts of cyclic and non-cyclic electron flow to meet the demands of the plant for ATP and reducing power. Is involved in nitrate assimilation. The chain is Ferredoxin--NADP reductase, embryo isozyme, chloroplastic from Oryza sativa subsp. japonica (Rice).